A 692-amino-acid chain; its full sequence is Elongation factor G (692 aa).

The region spanning 8 to 282 (AKTRNIGIMA…AVIDYLPSPL (275 aa)) is the tr-type G domain. Residues 17 to 24 (AHVDAGKT), 81 to 85 (DTPGH), and 135 to 138 (NKMD) contribute to the GTP site.

It belongs to the TRAFAC class translation factor GTPase superfamily. Classic translation factor GTPase family. EF-G/EF-2 subfamily.

The protein localises to the cytoplasm. Its function is as follows. Catalyzes the GTP-dependent ribosomal translocation step during translation elongation. During this step, the ribosome changes from the pre-translocational (PRE) to the post-translocational (POST) state as the newly formed A-site-bound peptidyl-tRNA and P-site-bound deacylated tRNA move to the P and E sites, respectively. Catalyzes the coordinated movement of the two tRNA molecules, the mRNA and conformational changes in the ribosome. The sequence is that of Elongation factor G from Streptococcus uberis (strain ATCC BAA-854 / 0140J).